The chain runs to 318 residues: MKHAEYEYLNLCRHVMEHGTKKEDRTGTGTVSVFGYQMRFDLSKGFPLLTTKRVPFRLVASELLWFMKGDTNIRYLLQHNNNIWNEWAFKNWVESDEYKGPDMTNFGLRSQEDEAFKTQYDEQMEIFKKNVLEDDEFARKYGYLGDVYGKQWRAWKTAAGETIDQLKDVIEMIKKTPDSRRLIVSAWNPEDVPNMALPPCHTLFQFYVADGKLSCQLYQRSGDIFLGIPFNIASYSLLTHLIAHECGLAVGEFVHTIGDAHIYTNHFEQVKKQLAREPRPFPTLKLNSDVKSVFDFEMGDLTIEGYDPHPAIKAPVAV.

Residues Arg25 and 180–181 each bind dUMP; that span reads RR. Cys200 acts as the Nucleophile in catalysis. DUMP contacts are provided by residues 220–223, Asn231, and 261–263; these read RSGD and HIY. Asp223 contacts (6R)-5,10-methylene-5,6,7,8-tetrahydrofolate. Ala317 is a binding site for (6R)-5,10-methylene-5,6,7,8-tetrahydrofolate.

This sequence belongs to the thymidylate synthase family. Bacterial-type ThyA subfamily. Homodimer.

The protein localises to the cytoplasm. The catalysed reaction is dUMP + (6R)-5,10-methylene-5,6,7,8-tetrahydrofolate = 7,8-dihydrofolate + dTMP. Its pathway is pyrimidine metabolism; dTTP biosynthesis. In terms of biological role, catalyzes the reductive methylation of 2'-deoxyuridine-5'-monophosphate (dUMP) to 2'-deoxythymidine-5'-monophosphate (dTMP) while utilizing 5,10-methylenetetrahydrofolate (mTHF) as the methyl donor and reductant in the reaction, yielding dihydrofolate (DHF) as a by-product. This enzymatic reaction provides an intracellular de novo source of dTMP, an essential precursor for DNA biosynthesis. The chain is Thymidylate synthase from Bacillus cytotoxicus (strain DSM 22905 / CIP 110041 / 391-98 / NVH 391-98).